Here is a 1342-residue protein sequence, read N- to C-terminus: DNA-directed RNA polymerase subunit beta (1342 aa).

Belongs to the RNA polymerase beta chain family. The RNAP catalytic core consists of 2 alpha, 1 beta, 1 beta' and 1 omega subunit. When a sigma factor is associated with the core the holoenzyme is formed, which can initiate transcription.

The enzyme catalyses RNA(n) + a ribonucleoside 5'-triphosphate = RNA(n+1) + diphosphate. Its function is as follows. DNA-dependent RNA polymerase catalyzes the transcription of DNA into RNA using the four ribonucleoside triphosphates as substrates. The protein is DNA-directed RNA polymerase subunit beta of Proteus mirabilis (strain HI4320).